The following is a 554-amino-acid chain: Glucose-6-phosphate isomerase (554 aa).

Residue Glu-359 is the Proton donor of the active site. Catalysis depends on residues His-390 and Lys-518.

Belongs to the GPI family.

The protein resides in the cytoplasm. It catalyses the reaction alpha-D-glucose 6-phosphate = beta-D-fructose 6-phosphate. Its pathway is carbohydrate biosynthesis; gluconeogenesis. It participates in carbohydrate degradation; glycolysis; D-glyceraldehyde 3-phosphate and glycerone phosphate from D-glucose: step 2/4. In terms of biological role, catalyzes the reversible isomerization of glucose-6-phosphate to fructose-6-phosphate. This Pseudomonas fluorescens (strain SBW25) protein is Glucose-6-phosphate isomerase.